Here is an 82-residue protein sequence, read N- to C-terminus: uncharacterized protein (82 aa).

Transmembrane regions (helical) follow at residues 4–26 (LDIA…TCIC), 31–48 (LMPM…FTIF), and 52–74 (FLGW…LIVV).

The protein resides in the cell membrane. This is an uncharacterized protein from Bacillus subtilis (strain 168).